The primary structure comprises 74 residues: MRAIISLLLISTMVFGVIEAVSVQKSLKIFEGERGDCVGESQQCADWSGPYCCKGYYCTCQYFPKCICVNDNGK.

A signal peptide spans 1-20 (MRAIISLLLISTMVFGVIEA). The propeptide occupies 21–34 (VSVQKSLKIFEGER). Intrachain disulfides connect Cys-37–Cys-53, Cys-44–Cys-58, Cys-52–Cys-68, and Cys-60–Cys-66. Asn-72 carries the post-translational modification Asparagine amide.

Belongs to the neurotoxin 07 (Beta/delta-agtx) family. 03 (aga-4) subfamily. Aga sub-subfamily. As to expression, expressed by the venom gland.

The protein resides in the secreted. Insecticidal neurotoxin that induces an irreversible spastic paralysis when injected into insects. Modifies presynaptic voltage-gated sodium channels (Nav), causing them to open at the normal resting potential of the nerve. This leads to spontaneous release of neurotransmitter and repetitive action potentials in motor neurons. The sequence is that of U3-agatoxin-Ao1h from Agelena orientalis (Funnel-web spider).